A 202-amino-acid chain; its full sequence is Thymidylate kinase (202 aa).

7 to 14 (GTEGVGKT) lines the ATP pocket.

Belongs to the thymidylate kinase family.

The catalysed reaction is dTMP + ATP = dTDP + ADP. Functionally, phosphorylation of dTMP to form dTDP in both de novo and salvage pathways of dTTP synthesis. This is Thymidylate kinase from Acinetobacter baylyi (strain ATCC 33305 / BD413 / ADP1).